Reading from the N-terminus, the 125-residue chain is Large ribosomal subunit protein bL12 (125 aa).

The protein belongs to the bacterial ribosomal protein bL12 family. Homodimer. Part of the ribosomal stalk of the 50S ribosomal subunit. Forms a multimeric L10(L12)X complex, where L10 forms an elongated spine to which 2 to 4 L12 dimers bind in a sequential fashion. Binds GTP-bound translation factors.

Forms part of the ribosomal stalk which helps the ribosome interact with GTP-bound translation factors. Is thus essential for accurate translation. The protein is Large ribosomal subunit protein bL12 of Chlorobium limicola (strain DSM 245 / NBRC 103803 / 6330).